We begin with the raw amino-acid sequence, 1759 residues long: Protein TIC 214 (1759 aa).

5 helical membrane-spanning segments follow: residues 23–45 (VVVGLYYGFMTTFSIGPSYLFLL), 64–84 (FITGQLIIFMSIYYAPLHLAL), 129–149 (IFFQNLLFQFFNPLFLPSSIF), 172–192 (IGWIIGHTFFMKWIEFLLICI), and 221–241 (IFVVFLFVTCLYYLGRIPPPF).

It belongs to the TIC214 family. As to quaternary structure, part of the Tic complex.

Its subcellular location is the plastid. The protein localises to the chloroplast inner membrane. Involved in protein precursor import into chloroplasts. May be part of an intermediate translocation complex acting as a protein-conducting channel at the inner envelope. The polypeptide is Protein TIC 214 (Phaseolus vulgaris (Kidney bean)).